Reading from the N-terminus, the 99-residue chain is Malonate decarboxylase acyl carrier protein (99 aa).

Position 25 is an O-(phosphoribosyl dephospho-coenzyme A)serine (S25).

The protein belongs to the MdcC family. Post-translationally, covalently binds the prosthetic group of malonate decarboxylase.

It localises to the cytoplasm. Its function is as follows. Subunit of malonate decarboxylase, it is an acyl carrier protein to which acetyl and malonyl thioester residues are bound via a 2'-(5''-phosphoribosyl)-3'-dephospho-CoA prosthetic group and turn over during the catalytic mechanism. This chain is Malonate decarboxylase acyl carrier protein, found in Pseudomonas fluorescens (strain Pf0-1).